The sequence spans 236 residues: MNTTPDTPTPRALRELTPLEARILGVLVEKQHTVPDTYPLSLNALTAGCNQKTARAPVMNVSEDEVTTALDGLKHLSLVMEGSSSRVPRFEHNMNRVLGIPSQAIALLTILLLRGPQTAAELRLNSARLHGFADISSVEAFLDELAARAQPLVVRLPRAPGARENRWMHLMCGEVNMADFASADAGGGADSVPPSEFEALKAEQKRLADEVTRLNALVQRMASELGIDVDTPGNAS.

The protein belongs to the UPF0502 family.

The polypeptide is UPF0502 protein BceJ2315_62050 (Burkholderia cenocepacia (strain ATCC BAA-245 / DSM 16553 / LMG 16656 / NCTC 13227 / J2315 / CF5610) (Burkholderia cepacia (strain J2315))).